A 425-amino-acid polypeptide reads, in one-letter code: Stabilizer of axonemal microtubules 4 (425 aa).

3 disordered regions span residues 93 to 126, 203 to 225, and 316 to 335; these read PLEV…PPTK, EGSG…SQAL, and KEPT…PCDP. Residues 207–222 show a composition bias toward polar residues; the sequence is FTKQSHQSPIVFQPPS.

Microtubule inner protein component of sperm flagellar doublet microtubules. Interacts with PPP1CA.

It localises to the cell projection. It is found in the cilium. The protein resides in the cytoplasm. Its subcellular location is the cytoskeleton. The protein localises to the flagellum axoneme. In Homo sapiens (Human), this protein is Stabilizer of axonemal microtubules 4.